Here is a 135-residue protein sequence, read N- to C-terminus: Large ribosomal subunit protein uL16c (135 aa).

The protein belongs to the universal ribosomal protein uL16 family. Part of the 50S ribosomal subunit.

Its subcellular location is the plastid. It localises to the chloroplast. The chain is Large ribosomal subunit protein uL16c from Panax ginseng (Korean ginseng).